The following is a 211-amino-acid chain: GTP pyrophosphokinase YjbM (211 aa).

Guanosine 3'-diphosphate 5'-triphosphate contacts are provided by residues 21–28 (KVKLKGIR), 41–42 (EF), and 46–48 (RVK). ATP-binding positions include 46–48 (RVK), Ser52, 56–59 (KARR), Asp72, and Arg77. Arg59 provides a ligand contact to guanosine 3'-diphosphate 5'-triphosphate. A Mg(2+)-binding site is contributed by Asp72. Guanosine 3'-diphosphate 5'-triphosphate is bound by residues Arg105, 112-114 (KES), and His120. Glu139 functions as the Proton acceptor in the catalytic mechanism. Residues Asn148 and 151 to 155 (ATIEH) each bind guanosine 3'-diphosphate 5'-triphosphate.

It belongs to the RelA/SpoT family. Homotetramer.

It carries out the reaction GTP + ATP = guanosine 3'-diphosphate 5'-triphosphate + AMP. The catalysed reaction is GDP + ATP = guanosine 3',5'-bis(diphosphate) + AMP. Its pathway is purine metabolism; ppGpp biosynthesis; ppGpp from GTP: step 1/2. Its activity is regulated as follows. Allosterically regulated by its own products; pppGpp simulates synthesis 10-fold more than ppGpp. 2 pppGpp molecules bind in a regulatory cleft in the middle of the tetramer in an asymmetric manner. There is a specific contact of Lys-25 to the gamma-phosphate of pppGpp, explaining why pppGpp stimulates activity but ppGpp does not. Functionally, functions as a (p)ppGpp synthase; GDP can be used instead of GTP, resulting in an increase of (p)ppGpp synthesis. The enzyme binds ATP, then GDP or GTP and catalysis is highly cooperative. In eubacteria ppGpp (guanosine 3'-diphosphate 5'-diphosphate) is a mediator of the stringent response that coordinates a variety of cellular activities in response to changes in nutritional abundance. Probably has a minor role in the stringent response. The polypeptide is GTP pyrophosphokinase YjbM (yjbM) (Bacillus subtilis (strain 168)).